Consider the following 82-residue polypeptide: MSDEEYSIYDEVEIEDMTYDPALQTYSYPCPCGDKFEIALADLQDGQDIAVCPSCSLMVRVIFEVDNLPKAPDAAASIAVSA.

Residues 8–64 (IYDEVEIEDMTYDPALQTYSYPCPCGDKFEIALADLQDGQDIAVCPSCSLMVRVIFE) enclose the DPH-type MB domain. Fe cation contacts are provided by Cys30, Cys32, Cys52, and Cys55.

The protein belongs to the DPH3 family. In terms of assembly, component of the 2-(3-amino-3-carboxypropyl)histidine synthase complex composed of dph-1, dph-2, dph-3 and a NADH-dependent reductase, predominantly cbr-1. Fe(2+) serves as cofactor.

It is found in the cytoplasm. The protein resides in the nucleus. It carries out the reaction [3Fe-4S](1+)-[protein] + Fe(2+)-[Dph3] = [3Fe-4S](0)-[protein] + Fe(3+)-[Dph3]. The enzyme catalyses 2 [3Fe-4S](0)-[protein] + 2 Fe(2+)-[Dph3] + NADH = 2 [4Fe-4S](1+)-[protein] + 2 [Dph3] + NAD(+) + H(+). It functions in the pathway protein modification; peptidyl-diphthamide biosynthesis. Functionally, required for the first step of diphthamide biosynthesis, a post-translational modification of histidine which occurs in elongation factor 2. Dph-1 and dph-2 transfer a 3-amino-3-carboxypropyl (ACP) group from S-adenosyl-L-methionine (SAM) to a histidine residue, the reaction is assisted by a reduction system comprising dph-3 and a NADH-dependent reductase, predominantly cbr-1. Acts as an electron donor to reduce the Fe-S cluster in dph1-dph2 keeping the [4Fe-4S] clusters in the active and reduced state. Restores iron to dph-1-dph-2 iron-sulfur clusters which have degraded from [4Fe-4S] to [3Fe-4S] by donating an iron atom to reform [4Fe-4S] clusters, in a manner dependent on the presence of elongation factor 2 and SAM. Associates with the elongator complex and is required for tRNA Wobble base modifications mediated by the elongator complex. The elongator complex is required for multiple tRNA modifications, including mcm5U (5-methoxycarbonylmethyl uridine), mcm5s 2U (5-methoxycarbonylmethyl-2-thiouridine), and ncm5U (5-carbamoylmethyl uridine). This Neurospora crassa (strain ATCC 24698 / 74-OR23-1A / CBS 708.71 / DSM 1257 / FGSC 987) protein is Diphthamide biosynthesis protein 3 (dph-3).